A 72-amino-acid chain; its full sequence is Translation initiation factor IF-1 (72 aa).

Residues 1 to 72 (MAKDDVIQMQ…SRARIVFRAK (72 aa)) form the S1-like domain.

It belongs to the IF-1 family. As to quaternary structure, component of the 30S ribosomal translation pre-initiation complex which assembles on the 30S ribosome in the order IF-2 and IF-3, IF-1 and N-formylmethionyl-tRNA(fMet); mRNA recruitment can occur at any time during PIC assembly.

It is found in the cytoplasm. One of the essential components for the initiation of protein synthesis. Stabilizes the binding of IF-2 and IF-3 on the 30S subunit to which N-formylmethionyl-tRNA(fMet) subsequently binds. Helps modulate mRNA selection, yielding the 30S pre-initiation complex (PIC). Upon addition of the 50S ribosomal subunit IF-1, IF-2 and IF-3 are released leaving the mature 70S translation initiation complex. The polypeptide is Translation initiation factor IF-1 (Burkholderia mallei (strain NCTC 10247)).